The chain runs to 114 residues: Ribonuclease P protein component (114 aa).

Belongs to the RnpA family. Consists of a catalytic RNA component (M1 or rnpB) and a protein subunit.

It carries out the reaction Endonucleolytic cleavage of RNA, removing 5'-extranucleotides from tRNA precursor.. RNaseP catalyzes the removal of the 5'-leader sequence from pre-tRNA to produce the mature 5'-terminus. It can also cleave other RNA substrates such as 4.5S RNA. The protein component plays an auxiliary but essential role in vivo by binding to the 5'-leader sequence and broadening the substrate specificity of the ribozyme. The chain is Ribonuclease P protein component from Borrelia hermsii (strain HS1 / DAH).